The following is a 34-amino-acid chain: MEVNILGLIATTLFILIPTSFLLILYVKTASQEE.

The helical transmembrane segment at 5-25 threads the bilayer; that stretch reads ILGLIATTLFILIPTSFLLIL.

It belongs to the PsbM family. PSII is composed of 1 copy each of membrane proteins PsbA, PsbB, PsbC, PsbD, PsbE, PsbF, PsbH, PsbI, PsbJ, PsbK, PsbL, PsbM, PsbT, PsbX, PsbY, PsbZ, Psb30/Ycf12, at least 3 peripheral proteins of the oxygen-evolving complex and a large number of cofactors. It forms dimeric complexes.

It is found in the plastid. The protein resides in the chloroplast thylakoid membrane. One of the components of the core complex of photosystem II (PSII). PSII is a light-driven water:plastoquinone oxidoreductase that uses light energy to abstract electrons from H(2)O, generating O(2) and a proton gradient subsequently used for ATP formation. It consists of a core antenna complex that captures photons, and an electron transfer chain that converts photonic excitation into a charge separation. This subunit is found at the monomer-monomer interface. This Pleurastrum terricola (Filamentous green alga) protein is Photosystem II reaction center protein M.